We begin with the raw amino-acid sequence, 315 residues long: Acetyl-coenzyme A carboxylase carboxyl transferase subunit alpha (315 aa).

In terms of domain architecture, CoA carboxyltransferase C-terminal spans 32–293 (NISDEIARLQ…RADLVQQLDM (262 aa)).

It belongs to the AccA family. In terms of assembly, acetyl-CoA carboxylase is a heterohexamer composed of biotin carboxyl carrier protein (AccB), biotin carboxylase (AccC) and two subunits each of ACCase subunit alpha (AccA) and ACCase subunit beta (AccD).

The protein localises to the cytoplasm. It catalyses the reaction N(6)-carboxybiotinyl-L-lysyl-[protein] + acetyl-CoA = N(6)-biotinyl-L-lysyl-[protein] + malonyl-CoA. It participates in lipid metabolism; malonyl-CoA biosynthesis; malonyl-CoA from acetyl-CoA: step 1/1. Its function is as follows. Component of the acetyl coenzyme A carboxylase (ACC) complex. First, biotin carboxylase catalyzes the carboxylation of biotin on its carrier protein (BCCP) and then the CO(2) group is transferred by the carboxyltransferase to acetyl-CoA to form malonyl-CoA. This chain is Acetyl-coenzyme A carboxylase carboxyl transferase subunit alpha, found in Pseudomonas putida (strain ATCC 47054 / DSM 6125 / CFBP 8728 / NCIMB 11950 / KT2440).